The primary structure comprises 634 residues: Leucine--tRNA ligase subunit alpha (634 aa).

The 'HIGH' region motif lies at 43-51 (PSGRIHMGH).

This sequence belongs to the class-I aminoacyl-tRNA synthetase family. In terms of assembly, seems to consist of an alpha chain and a beta chain.

The protein localises to the cytoplasm. It carries out the reaction tRNA(Leu) + L-leucine + ATP = L-leucyl-tRNA(Leu) + AMP + diphosphate. The chain is Leucine--tRNA ligase subunit alpha (leuS) from Aquifex aeolicus (strain VF5).